Reading from the N-terminus, the 471-residue chain is Probable multidrug-efflux transporter MT1670 (471 aa).

14 helical membrane-spanning segments follow: residues 23-43 (IVLA…ISLL), 55-75 (LYAW…TTVN), 91-111 (LAVF…QILV), 116-136 (LQGI…NSTL), 146-166 (ALVS…GGLF), 174-194 (WAFG…PVAL), 213-233 (VPVW…VAAL), 237-257 (LVQT…FVVV), 279-299 (IYLT…VPLF), 308-328 (PVAA…GEVA), 337-357 (VIGH…ALGA), 366-386 (VGII…IGIA), 410-430 (AINV…GVVV), and 438-458 (VAAA…GVIA).

The protein belongs to the major facilitator superfamily.

It localises to the cell membrane. Functionally, could be involved in fluoroquinolones efflux. The polypeptide is Probable multidrug-efflux transporter MT1670 (Mycobacterium tuberculosis (strain CDC 1551 / Oshkosh)).